The primary structure comprises 414 residues: NADH-quinone oxidoreductase subunit D (414 aa).

It belongs to the complex I 49 kDa subunit family. In terms of assembly, NDH-1 is composed of 14 different subunits. Subunits NuoB, C, D, E, F, and G constitute the peripheral sector of the complex.

The protein resides in the cell inner membrane. The catalysed reaction is a quinone + NADH + 5 H(+)(in) = a quinol + NAD(+) + 4 H(+)(out). Its function is as follows. NDH-1 shuttles electrons from NADH, via FMN and iron-sulfur (Fe-S) centers, to quinones in the respiratory chain. The immediate electron acceptor for the enzyme in this species is believed to be ubiquinone. Couples the redox reaction to proton translocation (for every two electrons transferred, four hydrogen ions are translocated across the cytoplasmic membrane), and thus conserves the redox energy in a proton gradient. The chain is NADH-quinone oxidoreductase subunit D from Akkermansia muciniphila (strain ATCC BAA-835 / DSM 22959 / JCM 33894 / BCRC 81048 / CCUG 64013 / CIP 107961 / Muc).